The following is a 270-amino-acid chain: Putative pyruvate, phosphate dikinase regulatory protein (270 aa).

148 to 155 (GVSRTSKT) serves as a coordination point for ADP.

The protein belongs to the pyruvate, phosphate/water dikinase regulatory protein family. PDRP subfamily.

The catalysed reaction is N(tele)-phospho-L-histidyl/L-threonyl-[pyruvate, phosphate dikinase] + ADP = N(tele)-phospho-L-histidyl/O-phospho-L-threonyl-[pyruvate, phosphate dikinase] + AMP + H(+). It catalyses the reaction N(tele)-phospho-L-histidyl/O-phospho-L-threonyl-[pyruvate, phosphate dikinase] + phosphate + H(+) = N(tele)-phospho-L-histidyl/L-threonyl-[pyruvate, phosphate dikinase] + diphosphate. Bifunctional serine/threonine kinase and phosphorylase involved in the regulation of the pyruvate, phosphate dikinase (PPDK) by catalyzing its phosphorylation/dephosphorylation. The sequence is that of Putative pyruvate, phosphate dikinase regulatory protein from Bacillus cereus (strain B4264).